Consider the following 760-residue polypeptide: GLC7-interacting protein 4 (760 aa).

2 disordered regions span residues 449–573 (KKKP…SLQS) and 593–626 (KSASTPNPSASSSLAPSPKVSSINNTSSGKSSST). Composition is skewed to low complexity over residues 454-474 (ITKLPASSSPSPSPTSSASPS) and 494-506 (SSRSPSVSPVRTT). A phosphoserine mark is found at Ser497 and Ser501. A compositionally biased stretch (basic and acidic residues) spans 512 to 525 (AETKKSVVSPEKRK). Polar residues predominate over residues 534-554 (SSSLQSYTNKQQTSYLNSTRH). Composition is skewed to low complexity over residues 561–573 (SKLNNQRSNSLQS) and 594–626 (SASTPNPSASSSLAPSPKVSSINNTSSGKSSST). Ser609 carries the phosphoserine modification.

The protein belongs to the GIP4 family. In terms of assembly, interacts with GLC7.

It is found in the cytoplasm. In terms of biological role, GLC7 phosphatase-regulatory protein involved in GLC7 subcellular redistribution and chromosome segregation. This Saccharomyces cerevisiae (strain ATCC 204508 / S288c) (Baker's yeast) protein is GLC7-interacting protein 4 (GIP4).